A 281-amino-acid chain; its full sequence is ATP phosphoribosyltransferase (281 aa).

It belongs to the ATP phosphoribosyltransferase family. Long subfamily. As to quaternary structure, equilibrium between an active dimeric form, an inactive hexameric form and higher aggregates. Interconversion between the various forms is largely reversible and is influenced by the natural substrates and inhibitors of the enzyme. The cofactor is Mg(2+).

It localises to the cytoplasm. It catalyses the reaction 1-(5-phospho-beta-D-ribosyl)-ATP + diphosphate = 5-phospho-alpha-D-ribose 1-diphosphate + ATP. It participates in amino-acid biosynthesis; L-histidine biosynthesis; L-histidine from 5-phospho-alpha-D-ribose 1-diphosphate: step 1/9. Its activity is regulated as follows. Feedback inhibited by histidine. Its function is as follows. Catalyzes the condensation of ATP and 5-phosphoribose 1-diphosphate to form N'-(5'-phosphoribosyl)-ATP (PR-ATP). Has a crucial role in the pathway because the rate of histidine biosynthesis seems to be controlled primarily by regulation of HisG enzymatic activity. The protein is ATP phosphoribosyltransferase of Mycolicibacterium gilvum (strain PYR-GCK) (Mycobacterium gilvum (strain PYR-GCK)).